Reading from the N-terminus, the 184-residue chain is UPF0398 protein BCG9842_B3730 (184 aa).

The protein belongs to the UPF0398 family.

This chain is UPF0398 protein BCG9842_B3730, found in Bacillus cereus (strain G9842).